The chain runs to 426 residues: 3-phosphoshikimate 1-carboxyvinyltransferase (426 aa).

3 residues coordinate 3-phosphoshikimate: Lys-22, Ser-23, and Arg-27. Residue Lys-22 participates in phosphoenolpyruvate binding. Gly-96 and Arg-124 together coordinate phosphoenolpyruvate. 3-phosphoshikimate is bound by residues Ser-170, Ser-171, Gln-172, Ser-198, Asp-314, Asn-337, and Lys-341. Residue Gln-172 coordinates phosphoenolpyruvate. Residue Asp-314 is the Proton acceptor of the active site. Positions 345, 387, and 412 each coordinate phosphoenolpyruvate.

It belongs to the EPSP synthase family. Monomer.

It localises to the cytoplasm. It carries out the reaction 3-phosphoshikimate + phosphoenolpyruvate = 5-O-(1-carboxyvinyl)-3-phosphoshikimate + phosphate. It functions in the pathway metabolic intermediate biosynthesis; chorismate biosynthesis; chorismate from D-erythrose 4-phosphate and phosphoenolpyruvate: step 6/7. In terms of biological role, catalyzes the transfer of the enolpyruvyl moiety of phosphoenolpyruvate (PEP) to the 5-hydroxyl of shikimate-3-phosphate (S3P) to produce enolpyruvyl shikimate-3-phosphate and inorganic phosphate. The polypeptide is 3-phosphoshikimate 1-carboxyvinyltransferase (Shewanella sp. (strain W3-18-1)).